The chain runs to 318 residues: B3 domain-containing protein At1g05930 (318 aa).

Positions 201-293 (FNRLISNDFL…VLCFAMRQWR (93 aa)) form a DNA-binding region, TF-B3.

It is found in the nucleus. This chain is B3 domain-containing protein At1g05930, found in Arabidopsis thaliana (Mouse-ear cress).